Consider the following 689-residue polypeptide: Glycine--tRNA ligase beta subunit (689 aa).

It belongs to the class-II aminoacyl-tRNA synthetase family. In terms of assembly, tetramer of two alpha and two beta subunits.

The protein resides in the cytoplasm. It catalyses the reaction tRNA(Gly) + glycine + ATP = glycyl-tRNA(Gly) + AMP + diphosphate. The protein is Glycine--tRNA ligase beta subunit of Acinetobacter baylyi (strain ATCC 33305 / BD413 / ADP1).